The sequence spans 234 residues: N-(5'-phosphoribosyl)anthranilate isomerase (234 aa).

Residues 211-234 (RAASSSPRPVDGESPAFQRSEKAG) are disordered.

The protein belongs to the TrpF family.

It carries out the reaction N-(5-phospho-beta-D-ribosyl)anthranilate = 1-(2-carboxyphenylamino)-1-deoxy-D-ribulose 5-phosphate. It participates in amino-acid biosynthesis; L-tryptophan biosynthesis; L-tryptophan from chorismate: step 3/5. This Afipia carboxidovorans (strain ATCC 49405 / DSM 1227 / KCTC 32145 / OM5) (Oligotropha carboxidovorans) protein is N-(5'-phosphoribosyl)anthranilate isomerase.